The sequence spans 208 residues: MGEPAFTSFPSPPVLGKLKRNMMPWALQKKREIHMAKAHRRRAARSALPMRLTSCIFRRPVTRIRSHPDNQVRRRKGDEHLEKPQQLCAYRRLQALQPCSSQGEGSSPLHLESVLSILAPGTAGESLDRAGAERVRIPLEPTPGRFPAVAGGPTPGMGCQLPPPLSGQLVTPADIRRQARRVKKARERLAKALQADRLARQAEMLTGG.

The protein belongs to the MBD3L family.

The polypeptide is Methyl-CpG-binding domain protein 3-like 5 (MBD3L5) (Homo sapiens (Human)).